We begin with the raw amino-acid sequence, 332 residues long: L-lactate dehydrogenase A chain (332 aa).

At alanine 2 the chain carries N-acetylalanine. Lysine 5 bears the N6-acetyllysine; alternate mark. At lysine 5 the chain carries N6-succinyllysine; alternate. The residue at position 14 (lysine 14) is an N6-acetyllysine. 29–57 provides a ligand contact to NAD(+); that stretch reads GAVGMACAISILMKELADEIALVDVMEDK. Lysine 57 carries the N6-acetyllysine; alternate modification. A Glycyl lysine isopeptide (Lys-Gly) (interchain with G-Cter in SUMO2); alternate cross-link involves residue lysine 57. The residue at position 81 (lysine 81) is an N6-acetyllysine. Arginine 99 serves as a coordination point for NAD(+). Residue arginine 106 coordinates substrate. Lysine 118 carries the post-translational modification N6-acetyllysine; alternate. Lysine 118 is subject to N6-succinyllysine; alternate. Lysine 126 bears the N6-acetyllysine mark. Asparagine 138 serves as a coordination point for NAD(+). Residues asparagine 138 and arginine 169 each contribute to the substrate site. Histidine 193 functions as the Proton acceptor in the catalytic mechanism. An N6-acetyllysine mark is found at lysine 224 and lysine 232. A Phosphotyrosine modification is found at tyrosine 239. Residue lysine 243 is modified to N6-acetyllysine. Threonine 248 contributes to the substrate binding site. Threonine 309 carries the phosphothreonine modification. Lysine 318 bears the N6-acetyllysine; alternate mark. An N6-succinyllysine; alternate modification is found at lysine 318. Threonine 322 carries the post-translational modification Phosphothreonine.

This sequence belongs to the LDH/MDH superfamily. LDH family. In terms of assembly, homotetramer. Interacts with PTEN upstream reading frame protein MP31. ISGylated.

Its subcellular location is the cytoplasm. It catalyses the reaction (S)-lactate + NAD(+) = pyruvate + NADH + H(+). Its pathway is fermentation; pyruvate fermentation to lactate; (S)-lactate from pyruvate: step 1/1. In terms of biological role, interconverts simultaneously and stereospecifically pyruvate and lactate with concomitant interconversion of NADH and NAD(+). This chain is L-lactate dehydrogenase A chain (LDHA), found in Sus scrofa (Pig).